A 656-amino-acid polypeptide reads, in one-letter code: MGVQGQPSVAPALREVPAGFETAHANGAKYLEMYRESLENPDAFWGREGKRLDWITPYTKVKNTDFTFGKVSIKWFEDGVLNASVNCIDRHLRDRALQTAIIFEPDDPKEPARHITYKELSEKVNRMANVLLSQGIMRGDRVVIYLPMIPEAAYAMLACARIGAIHSIVFAGFSPDALANRINDCGAKLVITADTAPRGGRRTPLKANTDAALLHCSDKVRCLVVKHTGDQISWVHGRDVDLLYLMEHVSPECPPRPMNAEDPLFILYTSGSTGKPKGVVHTTGGYLVYAAMTHQYTFDYKDGDVFWCTADVGWVTGHSYIIYGPLANGATTLMFEGVPTFPDAGRFWAVCEKHKVNQFYTAPTAIRALMGQGPEWVEKYDLSSLRVLGSVGEPINPEAWVWYDKYVGKGKCPIVDTFWQTETGGHMITPLPGATPTKPGSATNPFFGVKPVVLDPQTAVRIGEVECEGVLCISDSWPGQMRTVWGDHDRFQETYFGQYRGYYFTGDGCRRDKDGYYWITGRVDDVINVSGHRMGTAEVESALVAHPQVAEAAVVGYPHDIKGQGIYAYVTLMNGIEPSEDLRKDLVKWVRTEIGPIASPDLIQWAPGLPKTRSGKIMRRILRKIAENDYGALGDISTLADPGVVQELIDNRMNRA.

CoA-binding positions include 198-201 (RGGR) and threonine 316. Residues 392–394 (GEP), 416–421 (DTFWQT), aspartate 507, and arginine 522 each bind ATP. Serine 530 is a CoA binding site. Arginine 533 provides a ligand contact to ATP. Mg(2+) contacts are provided by valine 544, histidine 546, and valine 549. CoA is bound at residue arginine 591. Lysine 616 carries the post-translational modification N6-acetyllysine.

It belongs to the ATP-dependent AMP-binding enzyme family. The cofactor is Mg(2+). Post-translationally, acetylated. Deacetylation by the SIR2-homolog deacetylase activates the enzyme.

It catalyses the reaction acetate + ATP + CoA = acetyl-CoA + AMP + diphosphate. Catalyzes the conversion of acetate into acetyl-CoA (AcCoA), an essential intermediate at the junction of anabolic and catabolic pathways. AcsA undergoes a two-step reaction. In the first half reaction, AcsA combines acetate with ATP to form acetyl-adenylate (AcAMP) intermediate. In the second half reaction, it can then transfer the acetyl group from AcAMP to the sulfhydryl group of CoA, forming the product AcCoA. The protein is Acetyl-coenzyme A synthetase of Rhodobacter capsulatus (strain ATCC BAA-309 / NBRC 16581 / SB1003).